A 507-amino-acid polypeptide reads, in one-letter code: Proton-coupled zinc antiporter SLC30A1 (507 aa).

Over 1–10 the chain is Cytoplasmic; that stretch reads MGCWGRNRGR. Residues 11–31 traverse the membrane as a helical segment; that stretch reads LLCMLLLTFMFMVLEVVVSRV. Topologically, residues 32 to 35 are extracellular; it reads TASL. The chain crosses the membrane as a helical span at residues 36–56; that stretch reads AMLSDSFHMLSDVLALVVALV. Zn(2+) contacts are provided by H43 and D47. The Cytoplasmic segment spans residues 57 to 78; it reads AERFARRTHATQKNTFGWIRAE. The chain crosses the membrane as a helical span at residues 79–99; it reads VMGALVNAIFLTGLCFAILLE. At 100-113 the chain is on the extracellular side; it reads AVERFIEPHEMQQP. The chain crosses the membrane as a helical span at residues 114–134; sequence LVVLSVGVAGLLVNVLGLCLF. Residues 135 to 247 are Cytoplasmic-facing; the sequence is HHHSGEGQGA…RAGQLNMRGV (113 aa). Residues 140–218 are disordered; it reads EGQGAGHGHS…EKLRSDDPVD (79 aa). The tract at residues 145–156 is 6 X 2 AA approximate repeats of H-G; that stretch reads GHGHSHGHGHGH. Over residues 147 to 165 the composition is skewed to basic residues; the sequence is GHSHGHGHGHLAKGARKAG. Polar residues predominate over residues 188–200; sequence TNTLVANTSNSNG. The segment covering 204–215 has biased composition (basic and acidic residues); that stretch reads DQAEPEKLRSDD. The chain crosses the membrane as a helical span at residues 248–268; the sequence is FLHVLGDALGSVIVVVNALVF. Zn(2+) is bound by residues H250 and D254. Residues 269–307 are Extracellular-facing; sequence YFSWKGCTEDDFCVNPCFPDPCKSSVELMNSTQAPMHEA. Residue N298 is glycosylated (N-linked (GlcNAc...) asparagine). Residues 308–328 traverse the membrane as a helical segment; sequence GPCWVLYLDPTLCIIMVCILL. Residues 329-507 lie on the Cytoplasmic side of the membrane; sequence YTTYPLLKES…VPNKQPESSL (179 aa). Position 506 is a phosphoserine (S506).

This sequence belongs to the cation diffusion facilitator (CDF) transporter (TC 2.A.4) family. SLC30A subfamily. As to quaternary structure, homodimer. Interacts with TMEM163. Interacts and forms a complex with TMC6 and TMC8; the interaction regulates zinc transport into the ER. As to expression, widely expressed. Detected in duodenum and jejunum but not in ileum and colon (at protein level). Expressed by neuroglial cells (at protein level).

It is found in the cell membrane. It localises to the basolateral cell membrane. Its subcellular location is the cytoplasmic vesicle membrane. The protein localises to the cytoplasm. The protein resides in the endoplasmic reticulum membrane. It is found in the golgi apparatus membrane. It localises to the nucleus membrane. It carries out the reaction Zn(2+)(in) + 2 H(+)(out) = Zn(2+)(out) + 2 H(+)(in). Its activity is regulated as follows. Calcium-dependent. Functionally, zinc ion:proton antiporter that could function at the plasma membrane mediating zinc efflux from cells against its electrochemical gradient protecting them from intracellular zinc accumulation and toxicity. Alternatively, could prevent the transport to the plasma membrane of CACNB2, the L-type calcium channels regulatory subunit, through a yet to be defined mechanism. By modulating the expression of these channels at the plasma membrane, could prevent calcium and zinc influx into cells. By the same mechanism, could also prevent L-type calcium channels-mediated heavy metal influx into cells. In some cells, could also function as a zinc ion:proton antiporter mediating zinc entry into the lumen of cytoplasmic vesicles. In macrophages, can increase zinc ions concentration into the lumen of cytoplasmic vesicles containing engulfed bacteria and could help inactivate them. Forms a complex with TMC6/EVER1 and TMC8/EVER2 at the ER membrane of keratynocytes which facilitates zinc uptake into the ER. Down-regulates the activity of transcription factors induced by zinc and cytokines. This Rattus norvegicus (Rat) protein is Proton-coupled zinc antiporter SLC30A1.